The sequence spans 465 residues: Chaperone protein dnaJ C76, chloroplastic (465 aa).

The N-terminal 38 residues, 1–38 (MTPAIFSPTTLPPSTATWPCSTSQKLITVRSPLKFKCR), are a transit peptide targeting the chloroplast. Residues 50–113 (DLYDLLGIDR…ISRQAYDKEQ (64 aa)) form the J domain. A disordered region spans residues 346–385 (AALPSSGNNNGSKASSNPQVTRKTFPSEEKPTSRRENRRQ). Positions 350-362 (SSGNNNGSKASSN) are enriched in low complexity. The span at 370–384 (FPSEEKPTSRRENRR) shows a compositional bias: basic and acidic residues.

This sequence belongs to the DnaJ family. Expressed in roots, exclusively in the stele.

It is found in the plastid. The protein localises to the chloroplast. In terms of biological role, may function together with HSC70 chaperone to assist protein folding and prevent protein aggregation during salt stress in the chloroplast. Involved in root development. Required for the position-dependent cell fate determination during root hair development. This is Chaperone protein dnaJ C76, chloroplastic from Arabidopsis thaliana (Mouse-ear cress).